The chain runs to 361 residues: Aromatic amino acid aminotransferase (361 aa).

Lys215 carries the N6-(pyridoxal phosphate)lysine modification.

It belongs to the class-II pyridoxal-phosphate-dependent aminotransferase family. In terms of assembly, homodimer. It depends on pyridoxal 5'-phosphate as a cofactor.

It catalyses the reaction an aromatic L-alpha-amino acid + 2-oxoglutarate = an aromatic oxo-acid + L-glutamate. Functionally, aminotransferase that catalyzes the conversion of aromatic amino acids and 2-oxoglutarate into corresponding aromatic oxo acids and L-glutamate. This Mycolicibacterium smegmatis (strain ATCC 700084 / mc(2)155) (Mycobacterium smegmatis) protein is Aromatic amino acid aminotransferase.